The sequence spans 215 residues: Holliday junction branch migration complex subunit RuvA (215 aa).

The domain I stretch occupies residues 1-67 (MIGWLQGERI…DDGSTLFGFC (67 aa)). The tract at residues 68–146 (DQQERDLFRT…NWAPLQEPSL (79 aa)) is domain II. The tract at residues 147 to 158 (SLVDRSDVKAIP) is flexible linker. A domain III region spans residues 159–215 (LGEPCLRDLQITLETLGYEDLEIRRAMRAVASGPDVPAEDDGDAWLRASLKWLSQSA).

This sequence belongs to the RuvA family. As to quaternary structure, homotetramer. Forms an RuvA(8)-RuvB(12)-Holliday junction (HJ) complex. HJ DNA is sandwiched between 2 RuvA tetramers; dsDNA enters through RuvA and exits via RuvB. An RuvB hexamer assembles on each DNA strand where it exits the tetramer. Each RuvB hexamer is contacted by two RuvA subunits (via domain III) on 2 adjacent RuvB subunits; this complex drives branch migration. In the full resolvosome a probable DNA-RuvA(4)-RuvB(12)-RuvC(2) complex forms which resolves the HJ.

The protein localises to the cytoplasm. Its function is as follows. The RuvA-RuvB-RuvC complex processes Holliday junction (HJ) DNA during genetic recombination and DNA repair, while the RuvA-RuvB complex plays an important role in the rescue of blocked DNA replication forks via replication fork reversal (RFR). RuvA specifically binds to HJ cruciform DNA, conferring on it an open structure. The RuvB hexamer acts as an ATP-dependent pump, pulling dsDNA into and through the RuvAB complex. HJ branch migration allows RuvC to scan DNA until it finds its consensus sequence, where it cleaves and resolves the cruciform DNA. This is Holliday junction branch migration complex subunit RuvA from Synechococcus sp. (strain WH7803).